We begin with the raw amino-acid sequence, 154 residues long: 6,7-dimethyl-8-ribityllumazine synthase (154 aa).

5-amino-6-(D-ribitylamino)uracil is bound by residues Phe22, 56–58, and 80–82; these read AFE and AVI. 85 to 86 contacts (2S)-2-hydroxy-3-oxobutyl phosphate; it reads AT. The active-site Proton donor is the His88. Phe113 is a binding site for 5-amino-6-(D-ribitylamino)uracil. Arg127 contributes to the (2S)-2-hydroxy-3-oxobutyl phosphate binding site.

The protein belongs to the DMRL synthase family. As to quaternary structure, forms an icosahedral capsid composed of 60 subunits, arranged as a dodecamer of pentamers.

It catalyses the reaction (2S)-2-hydroxy-3-oxobutyl phosphate + 5-amino-6-(D-ribitylamino)uracil = 6,7-dimethyl-8-(1-D-ribityl)lumazine + phosphate + 2 H2O + H(+). The protein operates within cofactor biosynthesis; riboflavin biosynthesis; riboflavin from 2-hydroxy-3-oxobutyl phosphate and 5-amino-6-(D-ribitylamino)uracil: step 1/2. In terms of biological role, catalyzes the formation of 6,7-dimethyl-8-ribityllumazine by condensation of 5-amino-6-(D-ribitylamino)uracil with 3,4-dihydroxy-2-butanone 4-phosphate. This is the penultimate step in the biosynthesis of riboflavin. The protein is 6,7-dimethyl-8-ribityllumazine synthase of Geobacillus thermodenitrificans (strain NG80-2).